A 361-amino-acid polypeptide reads, in one-letter code: Serine/threonine-protein kinase SRK2B (361 aa).

Residues 4-260 enclose the Protein kinase domain; sequence YELVKDIGAG…IGDIKKHPWF (257 aa). Residues 10–18 and K33 contribute to the ATP site; that span reads IGAGNFGVA. D123 serves as the catalytic Proton acceptor. S154 is subject to Phosphoserine. The disordered stretch occupies residues 311-361; the sequence is AFGWGGGEDAEGKEEDAEEEVEEVEEEEDEEDEYDKTVKQVHASMGEVRVS. Residues 318 to 344 are compositionally biased toward acidic residues; it reads EDAEGKEEDAEEEVEEVEEEEDEEDEY.

It belongs to the protein kinase superfamily. Ser/Thr protein kinase family. As to expression, expressed in seedlings.

It catalyses the reaction L-seryl-[protein] + ATP = O-phospho-L-seryl-[protein] + ADP + H(+). The enzyme catalyses L-threonyl-[protein] + ATP = O-phospho-L-threonyl-[protein] + ADP + H(+). The polypeptide is Serine/threonine-protein kinase SRK2B (SRK2B) (Arabidopsis thaliana (Mouse-ear cress)).